The chain runs to 466 residues: Neuropeptide Y receptor type 5 (466 aa).

Over 1–63 (MEVKLEEHFN…YRGSVDDLQY (63 aa)) the chain is Extracellular. N-linked (GlcNAc...) asparagine glycosylation is found at Asn10, Asn17, Asn38, and Asn39. Residues 64–84 (FLIGLYTFVSLLGFMGNLLIL) traverse the membrane as a helical segment. Topologically, residues 85–98 (MAVMKKRNQKTTVN) are cytoplasmic. A helical membrane pass occupies residues 99–119 (FLIGNLAFSDILVVLFCSPFT). The Extracellular portion of the chain corresponds to 120 to 138 (LTSVLLDQWMFGKAMCHIM). An intrachain disulfide couples Cys135 to Cys219. Residues 139 to 159 (PFLQCVSVLVSTLILISIAIV) form a helical membrane-spanning segment. The Cytoplasmic segment spans residues 160–177 (RYHMIKHPISNNLTANHG). The chain crosses the membrane as a helical span at residues 178 to 198 (YFLIATVWTLGFAICSPLPVF). The Extracellular segment spans residues 199-229 (HSLVELKETFGSALLSSKYLCVESWPSDSYR). The helical transmembrane segment at 230–250 (IAFTISLLLVQYILPLVCLTV) threads the bilayer. Topologically, residues 251-389 (SHTSVCRSIS…KKRSRSVFYR (139 aa)) are cytoplasmic. The disordered stretch occupies residues 323-346 (GPSQEKHLTVPENPGSVRSQLSPS). Residues 390–410 (LTILILVFAVSWMPLHVFHVV) form a helical membrane-spanning segment. Over 411-427 (TDFNDNLISNRHFKLVY) the chain is Extracellular. Residues 428 to 448 (CICHLLGMMSCCLNPILYGFL) form a helical membrane-spanning segment. Residues 449–466 (NNGIKADLRALIHCLHMS) are Cytoplasmic-facing. The S-palmitoyl cysteine moiety is linked to residue Cys462.

The protein belongs to the G-protein coupled receptor 1 family.

It localises to the cell membrane. Functionally, receptor for neuropeptide Y and peptide YY. The activity of this receptor is mediated by G proteins that inhibit adenylate cyclase activity. Seems to be associated with food intake. Could be involved in feeding disorders. This chain is Neuropeptide Y receptor type 5 (Npy5r), found in Mus musculus (Mouse).